A 199-amino-acid polypeptide reads, in one-letter code: Recombination protein RecR (199 aa).

The segment at 58 to 73 adopts a C4-type zinc-finger fold; that stretch reads CSICNNITDVDPCTYC. Positions 81–176 constitute a Toprim domain; that stretch reads QVICVVEEPT…RVTRIATGVP (96 aa).

This sequence belongs to the RecR family.

In terms of biological role, may play a role in DNA repair. It seems to be involved in an RecBC-independent recombinational process of DNA repair. It may act with RecF and RecO. In Koribacter versatilis (strain Ellin345), this protein is Recombination protein RecR.